Here is a 608-residue protein sequence, read N- to C-terminus: MKWVTFISLFFLFSSAYSRGLVRREAYKSEIAHRYNDLGEEHFRGLVLVAFSQYLQQCPFEDHVKLAKEVTEFAKACAAEESGANCDKSLHTLFGDKLCTVASLRDKYGDMADCCEKQEPDRNECFLAHKDDNPGFPPLVAPEPDALCAAFQDNEQLFLGKYLYEIARRHPYFYAPELLYYAQQYKGVFAECCQAADKAACLGPKIEALREKVLLSSAKERFKCASLQKFGDRAFKAWSVARLSQRFPKADFAEISKVVTDLTKVHKECCHGDLLECADDRADLAKYMCENQDSISTKLKECCDKPVLEKSQCLAEVERDELPGDLPSLAADFVEDKEVCKNYQEAKDVFLGTFLYEYARRHPEYSVSLLLRLAKEYEATLEKCCATDDPPTCYAKVLDEFKPLVDEPQNLVKTNCELFEKLGEYGFQNALLVRYTKKAPQVSTPTLVEVSRKLGKVGTKCCKKPESERMSCAEDFLSVVLNRLCVLHEKTPVSERVTKCCSESLVNRRPCFSGLEVDETYVPKEFNAETFTFHADLCTLPEAEKQVKKQTALVELLKHKPKATDEQLKTVMGDFGAFVEKCCAAENKEGCFSEEGPKLVAAAQAALV.

Positions 1 to 18 are cleaved as a signal peptide; sequence MKWVTFISLFFLFSSAYS. The propeptide occupies 19 to 24; sequence RGLVRR. 3 consecutive Albumin domains span residues 19–210, 211–403, and 404–601; these read RGLV…EALR, EKVL…EFKP, and LVDE…KLVA. Ser29 carries the phosphoserine modification. Residues Glu30 and Asp37 each coordinate Ca(2+). A disulfide bridge links Cys77 with Cys86. Phosphoserine is present on residues Ser82 and Ser89. His91 is a Zn(2+) binding site. 6 cysteine pairs are disulfide-bonded: Cys99–Cys115, Cys114–Cys125, Cys148–Cys193, Cys192–Cys201, Cys224–Cys270, and Cys269–Cys277. At Lys229 the chain carries N6-succinyllysine. Position 268 (Glu268) interacts with Ca(2+). Zn(2+) is bound by residues His271 and Asp273. Ca(2+) contacts are provided by Asp273, Glu276, Asp279, and Asp283. Intrachain disulfides connect Cys289–Cys303, Cys302–Cys313, Cys340–Cys385, Cys384–Cys393, Cys416–Cys462, Cys461–Cys472, Cys485–Cys501, and Cys500–Cys511. Position 443 is a phosphoserine (Ser443). Phosphothreonine occurs at positions 444 and 446. Lys460 carries the N6-succinyllysine modification. Residue Ser513 is modified to Phosphoserine. 2 disulfide bridges follow: Cys538/Cys583 and Cys582/Cys591. Position 558 is an N6-methyllysine (Lys558). Thr570 carries the post-translational modification Phosphothreonine. Lys588 is modified (N6-succinyllysine).

This sequence belongs to the ALB/AFP/VDB family. In terms of assembly, interacts with FCGRT; this interaction regulates ALB homeostasis. Interacts with TASOR. In plasma, occurs in a covalently-linked complex with chromophore-bound alpha-1-microglobulin; this interaction does not prevent fatty acid binding to ALB. Post-translationally, phosphorylated by FAM20C in the extracellular medium. In terms of tissue distribution, plasma.

The protein localises to the secreted. Binds water, Ca(2+), Na(+), K(+), fatty acids, hormones, bilirubin and drugs. Its main function is the regulation of the colloidal osmotic pressure of blood. Major zinc transporter in plasma, typically binds about 80% of all plasma zinc. Major calcium and magnesium transporter in plasma, binds approximately 45% of circulating calcium and magnesium in plasma. Potentially has more than two calcium-binding sites and might additionally bind calcium in a non-specific manner. The shared binding site between zinc and calcium at residue Asp-273 suggests a crosstalk between zinc and calcium transport in the blood. The rank order of affinity is zinc &gt; calcium &gt; magnesium. Binds to the bacterial siderophore enterobactin and inhibits enterobactin-mediated iron uptake of E.coli from ferric transferrin, and may thereby limit the utilization of iron and growth of enteric bacteria such as E.coli. Does not prevent iron uptake by the bacterial siderophore aerobactin. In Canis lupus familiaris (Dog), this protein is Albumin (ALB).